Consider the following 1192-residue polypeptide: Pyruvate carboxylase (1192 aa).

The disordered stretch occupies residues methionine 1–glutamine 23. The Biotin carboxylation domain occupies glutamine 40–glutamate 492. ATP contacts are provided by lysine 158, glutamate 242, and histidine 277. Positions arginine 162–alanine 359 constitute an ATP-grasp domain. Arginine 334 is a catalytic residue. One can recognise a Pyruvate carboxyltransferase domain in the interval cysteine 578–arginine 846. Residues arginine 586–glutamine 590 and arginine 659 contribute to the substrate site. Aspartate 587 is a binding site for a divalent metal cation. Residues lysine 755, histidine 785, and histidine 787 each coordinate a divalent metal cation. N6-carboxylysine is present on lysine 755. Residue threonine 920 participates in substrate binding. Residues lysine 1115–valine 1190 form the Biotinyl-binding domain. An N6-biotinyllysine modification is found at lysine 1156.

Biotin is required as a cofactor. Zn(2+) serves as cofactor.

The protein resides in the cytoplasm. It carries out the reaction hydrogencarbonate + pyruvate + ATP = oxaloacetate + ADP + phosphate + H(+). It functions in the pathway carbohydrate biosynthesis; gluconeogenesis. Its function is as follows. Pyruvate carboxylase catalyzes a 2-step reaction, involving the ATP-dependent carboxylation of the covalently attached biotin in the first step and the transfer of the carboxyl group to pyruvate in the second. The protein is Pyruvate carboxylase (pyc) of Aspergillus niger.